The primary structure comprises 159 residues: Transmembrane protein 88 (159 aa).

A run of 2 helical transmembrane segments spans residues 43 to 63 (LLLL…MLGF) and 88 to 108 (FTAL…LALA).

It belongs to the TMEM88 family. In terms of assembly, interacts (via C-terminus) with DVL1.

Its subcellular location is the cell membrane. Its function is as follows. Inhibits the Wnt/beta-catenin signaling pathway. Crucial for heart development and acts downstream of GATA factors in the pre-cardiac mesoderm to specify lineage commitment of cardiomyocyte development. The chain is Transmembrane protein 88 (Tmem88) from Mus musculus (Mouse).